Here is a 468-residue protein sequence, read N- to C-terminus: MRIEHDFIGQMEISDEVYYGIQTLRASENFFITNDKLCSYPVFIKSFAQVKKAAALANAQLGLIDEKLKIAICHACDLLVDGKYHDQFIVDMIQGGAGTSTNMNMNEVIANLALEYMGHQKGEYQFCHPNDHVNRSQSTNDAYPSALKIAIYERLSNLVAPMKALRDAFAQKAKEFAHVIKMGRTQLQDAVPMTLGQEFETYALMVDRDIEQVLDARNWVRELNLGGTVIGTGINSHPDYRSLIEKKIQEVTGRPFVMANNLIEATQSTGAYVQVSGVLKRIAVKLSKVCNDLRLLSSGPRAGLNEINLPKMQPGSSIMPGKVNPVIPEVVNQVCFAVIGNDLSVALAAEGGQLQLNVFEPVIAYKLFHSFVILGRAIETLTTKCVEGITANEKICHDYVFNSIGIVTALNPHIGYEKSAMIAKEALKSDRSIYDIALEKKILTKEQLDDIFKPENMLSPHAFKKHKD.

Positions 99, 138, 139, 140, and 185 each coordinate L-aspartate. Residues Gly-315–Asn-324 are SS loop. Ser-316 functions as the Proton acceptor in the catalytic mechanism. Residues Ser-317 and Lys-322 each contribute to the L-aspartate site.

This sequence belongs to the class-II fumarase/aspartase family. Aspartase subfamily. In terms of assembly, homotetramer.

The enzyme catalyses L-aspartate = fumarate + NH4(+). In terms of biological role, catalyzes the reversible conversion of L-aspartate to fumarate and ammonia. The protein is Aspartate ammonia-lyase (aspA) of Helicobacter pylori (strain J99 / ATCC 700824) (Campylobacter pylori J99).